The primary structure comprises 245 residues: Small ribosomal subunit protein uS3 (245 aa).

The KH type-2 domain maps to 39–111 (IRNFINKNYS…EVFFNVIEIK (73 aa)).

The protein belongs to the universal ribosomal protein uS3 family. In terms of assembly, part of the 30S ribosomal subunit. Forms a tight complex with proteins S10 and S14.

Binds the lower part of the 30S subunit head. Binds mRNA in the 70S ribosome, positioning it for translation. The sequence is that of Small ribosomal subunit protein uS3 from Phytoplasma mali (strain AT).